Here is a 338-residue protein sequence, read N- to C-terminus: Fructose-1,6-bisphosphatase class 1 1 (338 aa).

Positions 91, 113, 115, and 116 each coordinate Mg(2+). Residues 116–119 (DGSS), Asn-208, and Lys-274 contribute to the substrate site. Glu-280 lines the Mg(2+) pocket.

Belongs to the FBPase class 1 family. In terms of assembly, homotetramer. Mg(2+) is required as a cofactor.

It is found in the cytoplasm. The enzyme catalyses beta-D-fructose 1,6-bisphosphate + H2O = beta-D-fructose 6-phosphate + phosphate. Its pathway is carbohydrate biosynthesis; gluconeogenesis. In Cupriavidus taiwanensis (strain DSM 17343 / BCRC 17206 / CCUG 44338 / CIP 107171 / LMG 19424 / R1) (Ralstonia taiwanensis (strain LMG 19424)), this protein is Fructose-1,6-bisphosphatase class 1 1.